We begin with the raw amino-acid sequence, 482 residues long: Putative ankyrin repeat protein FPV232 (482 aa).

9 ANK repeats span residues 36-65, 69-100, 101-128, 129-161, 166-195, 199-228, 232-265, 270-297, and 301-332; these read IPLI…NVNE, RYLT…DLSS, YEER…DGNR, TIDD…DTKI, KLKT…EVNS, GNNS…NTDH, CGTT…SVNI, LGFT…DPNI, and EKET…LRAF.

The polypeptide is Putative ankyrin repeat protein FPV232 (Fowlpox virus (strain NVSL) (FPV)).